Here is a 404-residue protein sequence, read N- to C-terminus: Cysteine desulfurase IscS (404 aa).

Pyridoxal 5'-phosphate contacts are provided by residues 75-76 (AT), Asn-155, Gln-183, and 203-205 (SGH). Lys-206 is subject to N6-(pyridoxal phosphate)lysine. Thr-243 is a binding site for pyridoxal 5'-phosphate. The Cysteine persulfide intermediate role is filled by Cys-328. Cys-328 is a binding site for [2Fe-2S] cluster.

This sequence belongs to the class-V pyridoxal-phosphate-dependent aminotransferase family. NifS/IscS subfamily. In terms of assembly, homodimer. Forms a heterotetramer with IscU, interacts with other sulfur acceptors. The cofactor is pyridoxal 5'-phosphate.

The protein resides in the cytoplasm. It carries out the reaction (sulfur carrier)-H + L-cysteine = (sulfur carrier)-SH + L-alanine. The protein operates within cofactor biosynthesis; iron-sulfur cluster biosynthesis. Functionally, master enzyme that delivers sulfur to a number of partners involved in Fe-S cluster assembly, tRNA modification or cofactor biosynthesis. Catalyzes the removal of elemental sulfur atoms from cysteine to produce alanine. Functions as a sulfur delivery protein for Fe-S cluster synthesis onto IscU, an Fe-S scaffold assembly protein, as well as other S acceptor proteins. The sequence is that of Cysteine desulfurase IscS from Mannheimia succiniciproducens (strain KCTC 0769BP / MBEL55E).